Consider the following 171-residue polypeptide: CS1 fimbrial subunit A (171 aa).

Positions 1–23 (MKLKKTIGAMALATLFATMGASA) are cleaved as a signal peptide.

This sequence belongs to the fimbrial CS1 protein family.

The protein resides in the fimbrium. In terms of biological role, fimbriae (also called pili), polar filaments radiating from the surface of the bacterium to a length of 0.5-1.5 micrometers and numbering 100-300 per cell, enable bacteria to colonize the epithelium of specific host organs. The polypeptide is CS1 fimbrial subunit A (csoA) (Escherichia coli).